The chain runs to 233 residues: Large ribosomal subunit protein uL1 (233 aa).

This sequence belongs to the universal ribosomal protein uL1 family. In terms of assembly, part of the 50S ribosomal subunit.

Binds directly to 23S rRNA. The L1 stalk is quite mobile in the ribosome, and is involved in E site tRNA release. In terms of biological role, protein L1 is also a translational repressor protein, it controls the translation of the L11 operon by binding to its mRNA. The protein is Large ribosomal subunit protein uL1 of Vibrio parahaemolyticus serotype O3:K6 (strain RIMD 2210633).